Consider the following 771-residue polypeptide: U-box domain-containing protein 6 (771 aa).

The 75-residue stretch at 274–348 (IPPEELRCPI…ASWCEQNGIT (75 aa)) folds into the U-box domain. Residues 394–415 (EESSTIESERQQKEKNNAPDEV) form a disordered region. Positions 400 to 411 (ESERQQKEKNNA) are enriched in basic and acidic residues. ARM repeat units follow at residues 456–499 (EEAR…NLAV), 502–542 (NRNK…CLEK), 544–581 (KPVIGSSQAVSFFVNLLLQDTKTQCKLDALHALYNLST), 583–622 (SPNIPTLLSSNIIKSLQVLASTGNHLWIEKSLAVLLNLAS), and 625–664 (EGKEEMITTQGMISTLATVLDTGDTVEQEQAVSCLVILCT). Over residues 706–722 (EQRHRDQPSPNKEEAPR) the composition is skewed to basic and acidic residues. Positions 706–751 (EQRHRDQPSPNKEEAPRKTVSAPMAIPAPVSAPESEVKPLTKSISR) are disordered.

The catalysed reaction is S-ubiquitinyl-[E2 ubiquitin-conjugating enzyme]-L-cysteine + [acceptor protein]-L-lysine = [E2 ubiquitin-conjugating enzyme]-L-cysteine + N(6)-ubiquitinyl-[acceptor protein]-L-lysine.. It participates in protein modification; protein ubiquitination. Functionally, functions as an E3 ubiquitin ligase. In Arabidopsis thaliana (Mouse-ear cress), this protein is U-box domain-containing protein 6 (PUB6).